We begin with the raw amino-acid sequence, 406 residues long: uncharacterized protein (406 aa).

The N-myristoyl glycine; by host moiety is linked to residue glycine 2. The segment at 291–406 (QLESTTEVKP…FQYNKPTYDI (116 aa)) is disordered. The segment covering 296–310 (TEVKPESTTEVKPES) has biased composition (basic and acidic residues). A compositionally biased stretch (polar residues) spans 311–323 (TSEVQPESTTEFQ). 3 stretches are compositionally biased toward low complexity: residues 324 to 333 (PESTTVVEPE), 341 to 351 (ESTTEFQPEST), and 359 to 369 (TTEPQVESTTE). A compositionally biased stretch (polar residues) spans 370 to 406 (FQPESSTEPQVESTVEVQAESMNESSYFQYNKPTYDI).

This is an uncharacterized protein from Acanthamoeba polyphaga (Amoeba).